The sequence spans 649 residues: Cysteine-rich receptor-like protein kinase 2 (649 aa).

An N-terminal signal peptide occupies residues 1-29; the sequence is MKKEPVHILPLYLPCLLMFLLSSLRQITG. Residues 30-258 lie on the Extracellular side of the membrane; sequence DARARAVKVT…IPRNGRSRGS (229 aa). 2 Gnk2-homologous domains span residues 33–134 and 139–245; these read ARAV…NYSF and KGPE…DQDF. N-linked (GlcNAc...) asparagine glycans are attached at residues Asn-47, Asn-131, Asn-149, Asn-154, and Asn-214. Residues 259–279 traverse the membrane as a helical segment; sequence VVVIVVSVLSSVVVFMIGVAV. Over 280 to 649 the chain is Cytoplasmic; it reads SVYICKRRTI…TVSQSSFYGR (370 aa). Positions 325-608 constitute a Protein kinase domain; that stretch reads FDNANKLGQG…HMLKNKEEVL (284 aa). ATP is bound by residues 331–339 and Lys-353; that span reads LGQGGFGTV. Residue Tyr-398 is modified to Phosphotyrosine. Asp-450 acts as the Proton acceptor in catalysis. Phosphoserine is present on residues Ser-454 and Ser-483. Thr-484 and Thr-489 each carry phosphothreonine. Tyr-497 carries the phosphotyrosine modification.

It belongs to the protein kinase superfamily. Ser/Thr protein kinase family. CRK subfamily.

The protein resides in the membrane. The enzyme catalyses L-seryl-[protein] + ATP = O-phospho-L-seryl-[protein] + ADP + H(+). It catalyses the reaction L-threonyl-[protein] + ATP = O-phospho-L-threonyl-[protein] + ADP + H(+). This is Cysteine-rich receptor-like protein kinase 2 (CRK2) from Arabidopsis thaliana (Mouse-ear cress).